A 300-amino-acid polypeptide reads, in one-letter code: Ribonuclease HIII (300 aa).

Positions 86–300 (RSRIGVDESG…FNEVLGSGNQ (215 aa)) constitute an RNase H type-2 domain. A divalent metal cation contacts are provided by Asp92, Glu93, and Asp196.

Belongs to the RNase HII family. RnhC subfamily. It depends on Mn(2+) as a cofactor. Mg(2+) serves as cofactor.

It is found in the cytoplasm. It carries out the reaction Endonucleolytic cleavage to 5'-phosphomonoester.. Its function is as follows. Endonuclease that specifically degrades the RNA of RNA-DNA hybrids. In Chlamydia trachomatis serovar L2 (strain ATCC VR-902B / DSM 19102 / 434/Bu), this protein is Ribonuclease HIII.